The following is a 582-amino-acid chain: DNA repair and recombination protein radC (582 aa).

The DNA-binding element occupies 146-150 (KRALR). Over residues 194–204 (KKEPMRVKPSL) the composition is skewed to basic and acidic residues. Disordered stretches follow at residues 194–226 (KKEPMRVKPSLEDDDLPPNPSIAGRNTSTNSAA), 310–400 (QIPN…INGQ), and 485–582 (APSG…QHQH). Residues 326-335 (QNQYTNQRQS) are compositionally biased toward polar residues. Over residues 516–529 (AAAQNNTAAANRMA) the composition is skewed to low complexity.

Belongs to the RAD52 family. Part of a complex that includes RAD51, RAD52 and RAD59.

The protein localises to the nucleus. Involved in DNA double-strand break (DSB) repair and recombination. Promotes the annealing of complementary single-stranded DNA and by stimulation of the RAD51 recombinase. The chain is DNA repair and recombination protein radC (radC) from Emericella nidulans (strain FGSC A4 / ATCC 38163 / CBS 112.46 / NRRL 194 / M139) (Aspergillus nidulans).